The sequence spans 195 residues: uncharacterized protein (195 aa).

The interval 1-35 (MASSSSAALRPFGTARLTPGRQTGRQTQQQISAPE) is disordered. Positions 20–30 (GRQTGRQTQQQ) are enriched in low complexity. One can recognise an MSP domain in the interval 76 to 184 (GVTVIPRVAR…PASINMALEA (109 aa)).

This is an uncharacterized protein from Caenorhabditis elegans.